The sequence spans 626 residues: Extracellular metalloproteinase 1 (626 aa).

A signal peptide spans 1 to 17 (MLSSLLAGAGLVALAAS). Residues 18 to 241 (HPTSHGNALT…IHGVVDYSAD (224 aa)) constitute a propeptide that is removed on maturation. N315 is a glycosylation site (N-linked (GlcNAc...) asparagine). H425 contributes to the Zn(2+) binding site. The active site involves E426. H429 contributes to the Zn(2+) binding site. Residues 606-626 (GSGARYSSTARTGSTALPSGC) are disordered. Residues 610-626 (RYSSTARTGSTALPSGC) are compositionally biased toward polar residues.

Belongs to the peptidase M36 family. Zn(2+) is required as a cofactor.

The protein localises to the secreted. Functionally, secreted metalloproteinase that allows assimilation of proteinaceous substrates. This is Extracellular metalloproteinase 1 (MEP1) from Phaeosphaeria nodorum (strain SN15 / ATCC MYA-4574 / FGSC 10173) (Glume blotch fungus).